The following is a 349-amino-acid chain: Fructose-1,6-bisphosphatase class 1 (349 aa).

Mg(2+) is bound by residues Glu-91, Asp-110, Leu-112, and Asp-113. Substrate-binding positions include 113-116 (DGSS) and Asn-205. Residue Glu-277 coordinates Mg(2+).

Belongs to the FBPase class 1 family. As to quaternary structure, homotetramer. Requires Mg(2+) as cofactor.

It localises to the cytoplasm. It catalyses the reaction beta-D-fructose 1,6-bisphosphate + H2O = beta-D-fructose 6-phosphate + phosphate. It participates in carbohydrate biosynthesis; gluconeogenesis. The polypeptide is Fructose-1,6-bisphosphatase class 1 (Rhizobium meliloti (strain 1021) (Ensifer meliloti)).